Here is a 44-residue protein sequence, read N- to C-terminus: U2-agatoxin-Ao1s (44 aa).

Residues 1 to 9 (KKVYSFLKL) constitute a propeptide that is removed on maturation. Intrachain disulfides connect C12–C28, C19–C33, and C27–C43.

This sequence belongs to the neurotoxin 01 (U2-agtx) family. As to expression, expressed by the venom gland.

It localises to the secreted. Its function is as follows. Insect active toxin causing rapid but reversible paralysis in crickets. No activity shown in mammals. Does not show effect on mammalian voltage-gated calcium channels. This Agelena orientalis (Funnel-web spider) protein is U2-agatoxin-Ao1s.